We begin with the raw amino-acid sequence, 202 residues long: GTP cyclohydrolase 1 (202 aa).

Zn(2+) is bound by residues Cys90, His93, and Cys163.

The protein belongs to the GTP cyclohydrolase I family. Homomer.

It carries out the reaction GTP + H2O = 7,8-dihydroneopterin 3'-triphosphate + formate + H(+). Its pathway is cofactor biosynthesis; 7,8-dihydroneopterin triphosphate biosynthesis; 7,8-dihydroneopterin triphosphate from GTP: step 1/1. The sequence is that of GTP cyclohydrolase 1 from Mycolicibacterium gilvum (strain PYR-GCK) (Mycobacterium gilvum (strain PYR-GCK)).